Consider the following 476-residue polypeptide: Aspartyl/glutamyl-tRNA(Asn/Gln) amidotransferase subunit B (476 aa).

Belongs to the GatB/GatE family. GatB subfamily. In terms of assembly, heterotrimer of A, B and C subunits.

It carries out the reaction L-glutamyl-tRNA(Gln) + L-glutamine + ATP + H2O = L-glutaminyl-tRNA(Gln) + L-glutamate + ADP + phosphate + H(+). It catalyses the reaction L-aspartyl-tRNA(Asn) + L-glutamine + ATP + H2O = L-asparaginyl-tRNA(Asn) + L-glutamate + ADP + phosphate + 2 H(+). Functionally, allows the formation of correctly charged Asn-tRNA(Asn) or Gln-tRNA(Gln) through the transamidation of misacylated Asp-tRNA(Asn) or Glu-tRNA(Gln) in organisms which lack either or both of asparaginyl-tRNA or glutaminyl-tRNA synthetases. The reaction takes place in the presence of glutamine and ATP through an activated phospho-Asp-tRNA(Asn) or phospho-Glu-tRNA(Gln). In Clostridium botulinum (strain Kyoto / Type A2), this protein is Aspartyl/glutamyl-tRNA(Asn/Gln) amidotransferase subunit B.